Reading from the N-terminus, the 702-residue chain is Elongation factor G (702 aa).

Residues 8–290 (ARYRNIGISA…AVIEYLPAPT (283 aa)) form the tr-type G domain. GTP-binding positions include 17-24 (AHIDAGKT), 88-92 (DTPGH), and 142-145 (NKMD).

This sequence belongs to the TRAFAC class translation factor GTPase superfamily. Classic translation factor GTPase family. EF-G/EF-2 subfamily.

The protein resides in the cytoplasm. In terms of biological role, catalyzes the GTP-dependent ribosomal translocation step during translation elongation. During this step, the ribosome changes from the pre-translocational (PRE) to the post-translocational (POST) state as the newly formed A-site-bound peptidyl-tRNA and P-site-bound deacylated tRNA move to the P and E sites, respectively. Catalyzes the coordinated movement of the two tRNA molecules, the mRNA and conformational changes in the ribosome. In Photorhabdus laumondii subsp. laumondii (strain DSM 15139 / CIP 105565 / TT01) (Photorhabdus luminescens subsp. laumondii), this protein is Elongation factor G.